We begin with the raw amino-acid sequence, 205 residues long: Holliday junction branch migration complex subunit RuvA (205 aa).

Residues 1–64 form a domain I region; sequence MIGKLTGLVD…EDAIRLFGFP (64 aa). The interval 65-143 is domain II; sequence SEVERDWFRL…ALGPVDSLTA (79 aa). The segment at 144-153 is flexible linker; sequence KLTIAEAEGT. Residues 153 to 205 form a domain III region; that stretch reads TAPVAAQDAITALVNLGYGRPQAAAAVATSLEALGETAPLADLIRRGLKELAR.

Belongs to the RuvA family. Homotetramer. Forms an RuvA(8)-RuvB(12)-Holliday junction (HJ) complex. HJ DNA is sandwiched between 2 RuvA tetramers; dsDNA enters through RuvA and exits via RuvB. An RuvB hexamer assembles on each DNA strand where it exits the tetramer. Each RuvB hexamer is contacted by two RuvA subunits (via domain III) on 2 adjacent RuvB subunits; this complex drives branch migration. In the full resolvosome a probable DNA-RuvA(4)-RuvB(12)-RuvC(2) complex forms which resolves the HJ.

The protein resides in the cytoplasm. The RuvA-RuvB-RuvC complex processes Holliday junction (HJ) DNA during genetic recombination and DNA repair, while the RuvA-RuvB complex plays an important role in the rescue of blocked DNA replication forks via replication fork reversal (RFR). RuvA specifically binds to HJ cruciform DNA, conferring on it an open structure. The RuvB hexamer acts as an ATP-dependent pump, pulling dsDNA into and through the RuvAB complex. HJ branch migration allows RuvC to scan DNA until it finds its consensus sequence, where it cleaves and resolves the cruciform DNA. In Beijerinckia indica subsp. indica (strain ATCC 9039 / DSM 1715 / NCIMB 8712), this protein is Holliday junction branch migration complex subunit RuvA.